The sequence spans 149 residues: NADH-ubiquinone oxidoreductase chain 6 (149 aa).

4 helical membrane-spanning segments follow: residues 23-43 (ILML…FYFI), 51-71 (MMMI…MISL), 83-103 (LSVT…MTKL), and 114-134 (VNFV…LTII).

This sequence belongs to the complex I subunit 6 family.

The protein resides in the mitochondrion membrane. It carries out the reaction a ubiquinone + NADH + 5 H(+)(in) = a ubiquinol + NAD(+) + 4 H(+)(out). Functionally, core subunit of the mitochondrial membrane respiratory chain NADH dehydrogenase (Complex I) that is believed to belong to the minimal assembly required for catalysis. Complex I functions in the transfer of electrons from NADH to the respiratory chain. The immediate electron acceptor for the enzyme is believed to be ubiquinone. This is NADH-ubiquinone oxidoreductase chain 6 (ND6) from Rhipicephalus sanguineus (Brown dog tick).